Here is a 431-residue protein sequence, read N- to C-terminus: Enolase (431 aa).

Position 166 (Q166) interacts with (2R)-2-phosphoglycerate. Catalysis depends on E208, which acts as the Proton donor. Mg(2+) contacts are provided by D245, E288, and D315. The (2R)-2-phosphoglycerate site is built by K340, R369, S370, and K391. K340 functions as the Proton acceptor in the catalytic mechanism.

The protein belongs to the enolase family. Mg(2+) is required as a cofactor.

The protein localises to the cytoplasm. The protein resides in the secreted. It localises to the cell surface. The enzyme catalyses (2R)-2-phosphoglycerate = phosphoenolpyruvate + H2O. It functions in the pathway carbohydrate degradation; glycolysis; pyruvate from D-glyceraldehyde 3-phosphate: step 4/5. Functionally, catalyzes the reversible conversion of 2-phosphoglycerate (2-PG) into phosphoenolpyruvate (PEP). It is essential for the degradation of carbohydrates via glycolysis. The polypeptide is Enolase (Clostridium botulinum (strain Okra / Type B1)).